The following is an 88-amino-acid chain: Small ribosomal subunit protein bS18 (88 aa).

Residues 1-11 are compositionally biased toward low complexity; the sequence is MTTANTTAKDN. Positions 1-21 are disordered; it reads MTTANTTAKDNAATKKRGRKA.

It belongs to the bacterial ribosomal protein bS18 family. In terms of assembly, part of the 30S ribosomal subunit. Forms a tight heterodimer with protein bS6.

Its function is as follows. Binds as a heterodimer with protein bS6 to the central domain of the 16S rRNA, where it helps stabilize the platform of the 30S subunit. This is Small ribosomal subunit protein bS18 from Thermoanaerobacter pseudethanolicus (strain ATCC 33223 / 39E) (Clostridium thermohydrosulfuricum).